Here is a 176-residue protein sequence, read N- to C-terminus: Nucleoside triphosphate/diphosphate phosphatase (176 aa).

Arg-23 functions as the Proton donor in the catalytic mechanism. Residues Asn-87, Asp-103, Asp-105, Asp-107, Asp-120, and Glu-123 each contribute to the Mg(2+) site.

This sequence belongs to the Ntdp family. Mg(2+) serves as cofactor.

The enzyme catalyses a ribonucleoside 5'-triphosphate + H2O = a ribonucleoside 5'-diphosphate + phosphate + H(+). The catalysed reaction is a ribonucleoside 5'-diphosphate + H2O = a ribonucleoside 5'-phosphate + phosphate + H(+). In terms of biological role, has nucleoside phosphatase activity towards nucleoside triphosphates and nucleoside diphosphates. This is Nucleoside triphosphate/diphosphate phosphatase from Bacillus anthracis (strain A0248).